A 195-amino-acid polypeptide reads, in one-letter code: Imidazoleglycerol-phosphate dehydratase (195 aa).

It belongs to the imidazoleglycerol-phosphate dehydratase family.

Its subcellular location is the cytoplasm. It catalyses the reaction D-erythro-1-(imidazol-4-yl)glycerol 3-phosphate = 3-(imidazol-4-yl)-2-oxopropyl phosphate + H2O. The protein operates within amino-acid biosynthesis; L-histidine biosynthesis; L-histidine from 5-phospho-alpha-D-ribose 1-diphosphate: step 6/9. The chain is Imidazoleglycerol-phosphate dehydratase from Methanosphaerula palustris (strain ATCC BAA-1556 / DSM 19958 / E1-9c).